The chain runs to 302 residues: Vomeronasal type-1 receptor 48 (302 aa).

Topologically, residues Met1–Thr16 are extracellular. A helical membrane pass occupies residues Phe17–Ile37. The Cytoplasmic portion of the chain corresponds to Lys38 to Asp49. Residues Leu50–Ala70 form a helical membrane-spanning segment. Topologically, residues Thr71–Leu91 are extracellular. A disulfide bridge links Cys85 with Cys172. A helical transmembrane segment spans residues Tyr92–Leu114. Residues Ser115–Asn131 lie on the Cytoplasmic side of the membrane. A helical transmembrane segment spans residues Ile132 to Ile152. At Ser153 to Glu193 the chain is on the extracellular side. Asn159 carries N-linked (GlcNAc...) asparagine glycosylation. The chain crosses the membrane as a helical span at residues Val194–His214. The Cytoplasmic segment spans residues Arg215–Gln238. A helical membrane pass occupies residues Thr239–Cys259. Over Ser260–Thr269 the chain is Extracellular. The helical transmembrane segment at Ser270–Ile290 threads the bilayer. Over Ser291 to Gly302 the chain is Cytoplasmic.

The protein belongs to the G-protein coupled receptor 1 family.

The protein localises to the cell membrane. In terms of biological role, putative pheromone receptor implicated in the regulation of social and reproductive behavior. The protein is Vomeronasal type-1 receptor 48 (Vmn1r48) of Mus musculus (Mouse).